Consider the following 458-residue polypeptide: Monomethylamine methyltransferase MtmB3 (458 aa).

Residue Pyl-202 is a non-standard amino acid, pyrrolysine.

It belongs to the monomethylamine methyltransferase family.

It carries out the reaction Co(I)-[methylamine-specific corrinoid protein] + methylamine + H(+) = methyl-Co(III)-[methylamine-specific corrinoid protein] + NH4(+). The protein operates within one-carbon metabolism; methanogenesis from methylamine. Functionally, catalyzes the transfer of the methyl group from monomethylamine to the corrinoid cofactor of MtmC. This Methanosarcina barkeri (strain Fusaro / DSM 804) protein is Monomethylamine methyltransferase MtmB3 (mtmB3).